The sequence spans 326 residues: Protein-ribulosamine 3-kinase, chloroplastic (326 aa).

A chloroplast-targeting transit peptide spans 1–30 (MAVASLSICFSARPHLLLRNFSPRPKFVAM). An ATP-binding site is contributed by 125–127 (EFI). Asp-230 (proton acceptor) is an active-site residue.

This sequence belongs to the fructosamine kinase family.

The protein resides in the plastid. Its subcellular location is the chloroplast. The enzyme catalyses N(6)-D-ribulosyl-L-lysyl-[protein] + ATP = N(6)-(3-O-phospho-D-ribulosyl)-L-lysyl-[protein] + ADP + H(+). The catalysed reaction is N(6)-(D-erythrulosyl)-L-lysyl-[protein] + ATP = N(6)-(3-O-phospho-D-erythrulosyl)-L-lysyl-[protein] + ADP + H(+). Initiates a process leading to the deglycation of proteins. Phosphorylates low-molecular-mass and protein-bound erythrulosamines and ribulosamines, but not fructosamines or psicosamines, on the third carbon of the sugar moiety. Protein-bound erythrulosamine 3-phosphates and ribulosamine 3-phosphates are unstable and decompose under physiological conditions. This Arabidopsis thaliana (Mouse-ear cress) protein is Protein-ribulosamine 3-kinase, chloroplastic.